Reading from the N-terminus, the 49-residue chain is Large ribosomal subunit protein bL32c (49 aa).

Residues 1 to 23 (MTPKKRKSKSKKNLRKTNWKKKA) are disordered.

It belongs to the bacterial ribosomal protein bL32 family.

The protein localises to the plastid. It is found in the chloroplast. The sequence is that of Large ribosomal subunit protein bL32c from Oltmannsiellopsis viridis (Marine flagellate).